Here is a 407-residue protein sequence, read N- to C-terminus: MVRNNNRRRQRTQRIVTTTTQTAPVPQQNVPKQPRRRRNRARRNRRQGRAMNMGALTRLSQPGLAFLKCAFAPPDFNTDPGKGIPDRFEGKVVTRKDVLNQSINFTANRDTFILIAPTPGVAYWVADVPAGTFPISTTTFNAVNFPGFNSMFGNAAASRSDQVSSFRYASMNVGIYPTSNLMQFAGSITVWKCPVKLSNVQFPVATTPATSALVHTLVGLDGVLAVGPDNFSESFIKGVFSQSVCNEPDFEFSDILEGIQTLPPANVTVATSGQPFNLAAGAEAVSGIVGWGNMDTIVIRVSAPTGAVNSAILKTWACLEYRPNPNAMLYQFGHDSPPCDEVALQEYRTVARSLPVAVIAAQNASMWERVKSIIKSSLAMASNVPGPIGIAASGLSGLSALFEGFGF.

Basic residues predominate over residues 1–12; that stretch reads MVRNNNRRRQRT. The interval 1–50 is disordered; it reads MVRNNNRRRQRTQRIVTTTTQTAPVPQQNVPKQPRRRRNRARRNRRQGRA. The segment covering 13 to 32 has biased composition (low complexity); it reads QRIVTTTTQTAPVPQQNVPK. A compositionally biased stretch (basic residues) spans 33-48; the sequence is QPRRRRNRARRNRRQG. Cysteine 69 and cysteine 318 form a disulfide bridge. The active site involves aspartate 75. 5 residues coordinate Ca(2+): aspartate 161, aspartate 221, aspartate 249, glutamate 251, and glycine 273.

The protein belongs to the peptidase A6 family. In terms of processing, capsid protein alpha autocatalytically maturates into capsid protein beta and peptide gamma.

It is found in the virion. The catalysed reaction is Hydrolysis of an asparaginyl bond involved in the maturation of the structural protein of the virus, typically -Asn-|-Ala- or -Asn-|-Phe-.. Its function is as follows. Capsid protein alpha self-assembles to form an icosahedral procapsid with a T=3 symmetry, about 30 nm in diameter, and consisting of 60 capsid proteins trimers. In addition, 240 calcium ions are incorporated per capsid during assembly. The capsid encapsulates the two genomic RNAs. Capsid maturation occurs via autoproteolytic cleavage of capsid protein alpha generating capsid protein beta and the membrane-active peptide gamma. Membrane-permeabilizing peptide produced by virus maturation, thereby creating the infectious virion. After endocytosis into the host cell, peptide gamma is probably exposed in endosomes, where it permeabilizes the endosomal membrane, facilitating translocation of viral capsid or RNA into the cytoplasm. Involved in specific recognition and packaging of viral RNA during assembly. The chain is Capsid protein alpha (alpha) from Heteronychus arator (African black beetle).